The primary structure comprises 353 residues: DNA integrity scanning protein DisA (353 aa).

The DAC domain maps to 6 to 144 (DKELMNILKI…GGIKYVLRDS (139 aa)). ATP-binding positions include Gly-73, Leu-91, and 104-108 (TRHRT).

It belongs to the DisA family. Homooctamer. The cofactor is Mg(2+).

It catalyses the reaction 2 ATP = 3',3'-c-di-AMP + 2 diphosphate. In terms of biological role, participates in a DNA-damage check-point that is active prior to asymmetric division when DNA is damaged. DisA forms globular foci that rapidly scan along the chromosomes during sporulation, searching for lesions. When a lesion is present, DisA pauses at the lesion site. This triggers a cellular response that culminates in a temporary block in sporulation initiation. Functionally, also has diadenylate cyclase activity, catalyzing the condensation of 2 ATP molecules into cyclic di-AMP (c-di-AMP). c-di-AMP acts as a signaling molecule that couples DNA integrity with progression of sporulation. The rise in c-di-AMP level generated by DisA while scanning the chromosome, operates as a positive signal that advances sporulation; upon encountering a lesion, the DisA focus arrests at the damaged site and halts c-di-AMP synthesis. This chain is DNA integrity scanning protein DisA, found in Clostridium botulinum (strain Kyoto / Type A2).